A 216-amino-acid polypeptide reads, in one-letter code: Large ribosomal subunit protein uL3 (216 aa).

Residues 136–155 (GVSISHRSHGSTGQRQDPGK) are disordered. N5-methylglutamine is present on Gln151.

Belongs to the universal ribosomal protein uL3 family. As to quaternary structure, part of the 50S ribosomal subunit. Forms a cluster with proteins L14 and L19. Methylated by PrmB.

Its function is as follows. One of the primary rRNA binding proteins, it binds directly near the 3'-end of the 23S rRNA, where it nucleates assembly of the 50S subunit. This chain is Large ribosomal subunit protein uL3, found in Rickettsia prowazekii (strain Madrid E).